We begin with the raw amino-acid sequence, 199 residues long: Large ribosomal subunit protein bL9 (199 aa).

Positions 153–199 (KPVKASEKKGRRPRRDEEASDEQILAEENSVTEEAVSEEIQNSESEN) are disordered.

This sequence belongs to the bacterial ribosomal protein bL9 family.

Functionally, binds to the 23S rRNA. This Treponema denticola (strain ATCC 35405 / DSM 14222 / CIP 103919 / JCM 8153 / KCTC 15104) protein is Large ribosomal subunit protein bL9.